A 395-amino-acid chain; its full sequence is MNFQRMTDLNLAGKRVLIREDLNVPVKNGVITSDARLRAALPTIKAALEKGAAVMVFSHLGRPVEGEPKPEQSLAPVAAYLTEALGQEVKLFTDYLDGVEVEAGQVVLLENVRFNPGEKKNNPELAQKYAALCDVFVMDAFGTAHRAEASTEGVARFAPVAAAGPLLAAELDALGRAMQTPEKPMVAIVAGSKVSTKLDVLNSLSGICDQLIVGGGIANTFLAAAGYNVGKSLYEADLVETAKQIAAKVSVPLPTDVVVADASQINFEDFLGSLAAAQAVIKKVEDVTANDMILDVGPETAKAFANILTTSKTILWNGPVGVFEVDQFGEGTKALSLAVAQSDAFSIAGGGDTLAAIDKYNVADQIGYISTGGGAFLEFVEGKTLPAVAVLLERA.

Substrate is bound by residues Asp21 to Asn23, Arg36, His59 to Arg62, Arg113, and Arg146. ATP is bound by residues Lys197, Glu324, and Gly350–Thr353.

It belongs to the phosphoglycerate kinase family. Monomer.

It is found in the cytoplasm. It carries out the reaction (2R)-3-phosphoglycerate + ATP = (2R)-3-phospho-glyceroyl phosphate + ADP. Its pathway is carbohydrate degradation; glycolysis; pyruvate from D-glyceraldehyde 3-phosphate: step 2/5. The polypeptide is Phosphoglycerate kinase (Acinetobacter baumannii (strain AB307-0294)).